The primary structure comprises 403 residues: Acetyl-CoA acetyltransferase IB (403 aa).

Cysteine 91 serves as the catalytic Acyl-thioester intermediate. Residues histidine 353 and cysteine 383 each act as proton acceptor in the active site. Positions 401 to 403 (AKL) match the Microbody targeting signal motif.

This sequence belongs to the thiolase-like superfamily. Thiolase family. As to quaternary structure, multimeric.

The protein localises to the peroxisome. The enzyme catalyses 2 acetyl-CoA = acetoacetyl-CoA + CoA. It participates in metabolic intermediate biosynthesis; (R)-mevalonate biosynthesis; (R)-mevalonate from acetyl-CoA: step 1/3. This Candida tropicalis (Yeast) protein is Acetyl-CoA acetyltransferase IB (PACTB).